A 109-amino-acid chain; its full sequence is MEQFETIAVAQAQQMLAQGQALLLDIRDAQSYAAGHVPGALHLTDATLPALMRQHDGVQPVMVMCYHGNSSRGAAQYLLHQGFDEVYSIDGGFDAWQRAYPEEVARGGD.

The region spanning 17–105 is the Rhodanese domain; sequence AQGQALLLDI…WQRAYPEEVA (89 aa). Cys65 acts as the Cysteine persulfide intermediate in catalysis.

Belongs to the GlpE family.

It is found in the cytoplasm. The enzyme catalyses thiosulfate + hydrogen cyanide = thiocyanate + sulfite + 2 H(+). It catalyses the reaction thiosulfate + [thioredoxin]-dithiol = [thioredoxin]-disulfide + hydrogen sulfide + sulfite + 2 H(+). Its function is as follows. Transferase that catalyzes the transfer of sulfur from thiosulfate to thiophilic acceptors such as cyanide or dithiols. May function in a CysM-independent thiosulfate assimilation pathway by catalyzing the conversion of thiosulfate to sulfite, which can then be used for L-cysteine biosynthesis. This chain is Thiosulfate sulfurtransferase GlpE, found in Edwardsiella ictaluri (strain 93-146).